The chain runs to 283 residues: tRNA-cytidine(32) 2-sulfurtransferase (283 aa).

The short motif at 37-42 is the PP-loop motif element; sequence SGGKDS. The [4Fe-4S] cluster site is built by Cys112, Cys115, and Cys203.

It belongs to the TtcA family. As to quaternary structure, homodimer. Mg(2+) is required as a cofactor. [4Fe-4S] cluster serves as cofactor.

Its subcellular location is the cytoplasm. The enzyme catalyses cytidine(32) in tRNA + S-sulfanyl-L-cysteinyl-[cysteine desulfurase] + AH2 + ATP = 2-thiocytidine(32) in tRNA + L-cysteinyl-[cysteine desulfurase] + A + AMP + diphosphate + H(+). It functions in the pathway tRNA modification. Catalyzes the ATP-dependent 2-thiolation of cytidine in position 32 of tRNA, to form 2-thiocytidine (s(2)C32). The sulfur atoms are provided by the cysteine/cysteine desulfurase (IscS) system. The polypeptide is tRNA-cytidine(32) 2-sulfurtransferase (Legionella pneumophila (strain Paris)).